The following is a 308-amino-acid chain: 3'(2'),5'-bisphosphate nucleotidase 1 (308 aa).

Ala2 carries the N-acetylalanine modification. Catalysis depends on Asp51, which acts as the Proton acceptor. Glu74, Asp117, Val119, and Asp120 together coordinate Mg(2+). Thr122 acts as the Proton acceptor in catalysis. Thr122 carries the post-translational modification Phosphothreonine. The AMP site is built by Thr195, His198, Gly220, and Lys224. Phosphoserine is present on Ser240. Lys244 carries the N6-succinyllysine modification. Asp247 lines the Mg(2+) pocket.

The protein belongs to the inositol monophosphatase superfamily. Requires Mg(2+) as cofactor. Highly expressed in heart, brain, spleen, lung, liver, skeletal muscle, kidney and testis.

The enzyme catalyses adenosine 3',5'-bisphosphate + H2O = AMP + phosphate. The catalysed reaction is adenosine 2',5'-bisphosphate + H2O = AMP + phosphate. It carries out the reaction 3'-phosphoadenylyl sulfate + H2O = adenosine 5'-phosphosulfate + phosphate. It catalyses the reaction 1D-myo-inositol 1,4-bisphosphate + H2O = 1D-myo-inositol 4-phosphate + phosphate. The enzyme catalyses 1D-myo-inositol 1,3,4-trisphosphate + H2O = 1D-myo-inositol 3,4-bisphosphate + phosphate. With respect to regulation, inhibited by Li(+) and Ca(2+), but not by Na(+). Its function is as follows. Phosphatase that converts 3'(2')-phosphoadenosine 5'-phosphate (PAP) to AMP and adenosine 3'-phosphate 5'-phosphosulfate (PAPS) to adenosine 5'-phosphosulfate (APS). Is also able to hydrolyze inositol 1,4-bisphosphate (Ins(1,4)P2) and inositol 1,3,4-trisphosphate (Ins(1,3,4)P3), but is not active on AMP, 3'-AMP, fructose-1,6-bisphosphate, Ins(1)P, Ins(2)P and Ins(1,4,5)P3. Probably prevents the toxic accumulation of PAP, a compound which inhibits a variety of proteins, including PAPS-utilizing enzymes such as sulfotransferases, and RNA processing enzymes. Could also play a role in inositol recycling and phosphoinositide metabolism. The polypeptide is 3'(2'),5'-bisphosphate nucleotidase 1 (Bpnt1) (Rattus norvegicus (Rat)).